A 219-amino-acid polypeptide reads, in one-letter code: Cytochrome b6 (219 aa).

The helical transmembrane segment at 32–52 (IFYCFGGIVLTCFIIQAATGF) threads the bilayer. Cysteine 35 contacts heme c. 2 residues coordinate heme b: histidine 86 and histidine 100. A run of 3 helical transmembrane segments spans residues 90 to 110 (SGLMVLVLLLHVSRVYLTAGF), 116 to 136 (LTWISGVILAICTVSFGVTGY), and 190 to 210 (AHTFILPLVTLALLLTHFLMI). Residues histidine 191 and histidine 206 each contribute to the heme b site.

The protein belongs to the cytochrome b family. PetB subfamily. In terms of assembly, the 4 large subunits of the cytochrome b6-f complex are cytochrome b6, subunit IV (17 kDa polypeptide, PetD), cytochrome f and the Rieske protein, while the 4 small subunits are PetG, PetL, PetM and PetN. The complex functions as a dimer. It depends on heme b as a cofactor. Heme c is required as a cofactor.

The protein localises to the plastid. The protein resides in the chloroplast thylakoid membrane. Functionally, component of the cytochrome b6-f complex, which mediates electron transfer between photosystem II (PSII) and photosystem I (PSI), cyclic electron flow around PSI, and state transitions. The sequence is that of Cytochrome b6 from Amphidinium operculatum (Dinoflagellate).